Reading from the N-terminus, the 369-residue chain is Cobalt-precorrin-5B C(1)-methyltransferase (369 aa).

The protein belongs to the CbiD family.

The catalysed reaction is Co-precorrin-5B + S-adenosyl-L-methionine = Co-precorrin-6A + S-adenosyl-L-homocysteine. It functions in the pathway cofactor biosynthesis; adenosylcobalamin biosynthesis; cob(II)yrinate a,c-diamide from sirohydrochlorin (anaerobic route): step 6/10. Catalyzes the methylation of C-1 in cobalt-precorrin-5B to form cobalt-precorrin-6A. The polypeptide is Cobalt-precorrin-5B C(1)-methyltransferase (Geobacter metallireducens (strain ATCC 53774 / DSM 7210 / GS-15)).